The following is a 245-amino-acid chain: tRNA (guanine-N(1)-)-methyltransferase (245 aa).

S-adenosyl-L-methionine is bound by residues Gly108 and 127-132 (IGDYVL).

It belongs to the RNA methyltransferase TrmD family. Homodimer.

It is found in the cytoplasm. The catalysed reaction is guanosine(37) in tRNA + S-adenosyl-L-methionine = N(1)-methylguanosine(37) in tRNA + S-adenosyl-L-homocysteine + H(+). Functionally, specifically methylates guanosine-37 in various tRNAs. This Lactobacillus delbrueckii subsp. bulgaricus (strain ATCC 11842 / DSM 20081 / BCRC 10696 / JCM 1002 / NBRC 13953 / NCIMB 11778 / NCTC 12712 / WDCM 00102 / Lb 14) protein is tRNA (guanine-N(1)-)-methyltransferase.